The chain runs to 45 residues: Large ribosomal subunit protein bL34 (45 aa).

Residues 1 to 45 (MTKRTFGGTSRKRKRVSGFRVRMRSHTGRRVIKSRRKRGRDRIAV) form a disordered region. A compositionally biased stretch (basic residues) spans 10–45 (SRKRKRVSGFRVRMRSHTGRRVIKSRRKRGRDRIAV).

The protein belongs to the bacterial ribosomal protein bL34 family.

The polypeptide is Large ribosomal subunit protein bL34 (Prochlorococcus marinus (strain MIT 9515)).